The chain runs to 128 residues: Large ribosomal subunit protein bL12 (128 aa).

This sequence belongs to the bacterial ribosomal protein bL12 family. In terms of assembly, homodimer. Part of the ribosomal stalk of the 50S ribosomal subunit. Forms a multimeric L10(L12)X complex, where L10 forms an elongated spine to which 2 to 4 L12 dimers bind in a sequential fashion. Binds GTP-bound translation factors.

In terms of biological role, forms part of the ribosomal stalk which helps the ribosome interact with GTP-bound translation factors. Is thus essential for accurate translation. The chain is Large ribosomal subunit protein bL12 from Picosynechococcus sp. (strain ATCC 27264 / PCC 7002 / PR-6) (Agmenellum quadruplicatum).